We begin with the raw amino-acid sequence, 132 residues long: UPF0299 membrane protein KPN78578_25390 (132 aa).

Transmembrane regions (helical) follow at residues 5-25, 38-60, 66-86, and 93-113; these read LTII…LYAG, GSII…PQWV, ILIR…MQYW, and LGPV…VVSW.

The protein belongs to the UPF0299 family.

The protein localises to the cell inner membrane. This Klebsiella pneumoniae subsp. pneumoniae (strain ATCC 700721 / MGH 78578) protein is UPF0299 membrane protein KPN78578_25390.